Consider the following 325-residue polypeptide: Fe-S cluster assembly protein DRE2 (325 aa).

Residues 1–169 are N-terminal SAM-like domain; that stretch reads MTLGDRLGLI…KKKDAGNNEQ (169 aa). Positions 170–222 are linker; sequence VVKLSVEDVEDDLDDDPEVSNELLSKAKFFNSLSLNQDAEIDENNLIKSTDGD. Residues Cys229, Cys240, Cys243, and Cys245 each coordinate [2Fe-2S] cluster. Positions 229–245 are fe-S binding site A; that stretch reads CGKTNTKKRRACKDCTC. Positions 288, 291, 299, and 302 each coordinate [4Fe-4S] cluster. 2 consecutive short sequence motifs (cx2C motif) follow at residues 288–291 and 299–302; these read CGSC and CSGC. The interval 288-302 is fe-S binding site B; that stretch reads CGSCSLGDAFRCSGC.

This sequence belongs to the anamorsin family. In terms of assembly, monomer. Interacts with TAH18. Interacts with MIA40. The cofactor is [2Fe-2S] cluster. Requires [4Fe-4S] cluster as cofactor.

It localises to the cytoplasm. It is found in the mitochondrion intermembrane space. Its function is as follows. Component of the cytosolic iron-sulfur (Fe-S) protein assembly (CIA) machinery required for the maturation of extramitochondrial Fe-S proteins. Part of an electron transfer chain functioning in an early step of cytosolic Fe-S biogenesis, facilitating the de novo assembly of a [4Fe-4S] cluster on the scaffold complex CFD1-NBP35. Electrons are transferred to DRE2 from NADPH via the FAD- and FMN-containing protein TAH18. TAH18-DRE2 are also required for the assembly of the diferric tyrosyl radical cofactor of ribonucleotide reductase (RNR), probably by providing electrons for reduction during radical cofactor maturation in the catalytic small subunit RNR2. The sequence is that of Fe-S cluster assembly protein DRE2 from Vanderwaltozyma polyspora (strain ATCC 22028 / DSM 70294 / BCRC 21397 / CBS 2163 / NBRC 10782 / NRRL Y-8283 / UCD 57-17) (Kluyveromyces polysporus).